Here is a 168-residue protein sequence, read N- to C-terminus: MAYVLVGFMGVGKTTIGNLLARKLGLKFIDIDEQIELEMNMKIKDIFEQYGETYFRTLEHNILKQHINMNIVLATGGGIIENPNNISLLKENKINIWVDTNINTVYNRIVNDVNRPNAMNKSFDAIKDLYFRRRSRYNEIAYISVNNDDELSDCVQEIHNFIIAEEGN.

An ATP-binding site is contributed by 10 to 15 (GVGKTT). Thr14 lines the Mg(2+) pocket. The substrate site is built by Asp32, Arg56, and Gly77. Arg115 lines the ATP pocket. Substrate is bound at residue Arg133.

It belongs to the shikimate kinase family. As to quaternary structure, monomer. Requires Mg(2+) as cofactor.

It is found in the cytoplasm. It catalyses the reaction shikimate + ATP = 3-phosphoshikimate + ADP + H(+). It participates in metabolic intermediate biosynthesis; chorismate biosynthesis; chorismate from D-erythrose 4-phosphate and phosphoenolpyruvate: step 5/7. In terms of biological role, catalyzes the specific phosphorylation of the 3-hydroxyl group of shikimic acid using ATP as a cosubstrate. The polypeptide is Shikimate kinase (Macrococcus caseolyticus (strain JCSC5402) (Macrococcoides caseolyticum)).